We begin with the raw amino-acid sequence, 481 residues long: Cobyric acid synthase (481 aa).

A GATase cobBQ-type domain is found at 248 to 435 (ALTVAWLAFS…LHGMFGADGF (188 aa)). Cys330 serves as the catalytic Nucleophile. The active site involves His427.

This sequence belongs to the CobB/CobQ family. CobQ subfamily.

Its pathway is cofactor biosynthesis; adenosylcobalamin biosynthesis. Its function is as follows. Catalyzes amidations at positions B, D, E, and G on adenosylcobyrinic A,C-diamide. NH(2) groups are provided by glutamine, and one molecule of ATP is hydrogenolyzed for each amidation. This chain is Cobyric acid synthase, found in Cereibacter sphaeroides (strain ATCC 17023 / DSM 158 / JCM 6121 / CCUG 31486 / LMG 2827 / NBRC 12203 / NCIMB 8253 / ATH 2.4.1.) (Rhodobacter sphaeroides).